A 353-amino-acid polypeptide reads, in one-letter code: MNGTEGPYFYVPMVNTSGIVRSPYEYPQYYLVNPAAYARLGAYMFLLILVGFPINFLTLYVTIEHKKLRTPLNYILLNLAVADLFMVFGGFTTTMYTSMHGYFVLGRLGCNIEGFFATLGGEIALWSLVVLAIERWVVVCKPISNFRFGENHAIMGLAFTWLMALACAAPPLVGWSRYIPEGMQCSCGIDYYTRAEGFNNESFVIYMFVCHFTVPLMVVFFCYGRLLCAVKEAAAAQQESETTQRAEREVTRMVIMMVVAFLVCWLPYASVAWWIFTHQGSEFGPVFMTIPAFFAKSSSIYNPMIYICLNKQFRHCMITTLCCGKNPFEEEEGASTASKTEASSVSSSSVSPA.

At 1–36 the chain is on the extracellular side; that stretch reads MNGTEGPYFYVPMVNTSGIVRSPYEYPQYYLVNPAA. 2 N-linked (GlcNAc...) asparagine glycosylation sites follow: N2 and N15. A helical membrane pass occupies residues 37–61; that stretch reads YARLGAYMFLLILVGFPINFLTLYV. Over 62-73 the chain is Cytoplasmic; that stretch reads TIEHKKLRTPLN. The helical transmembrane segment at 74 to 96 threads the bilayer; that stretch reads YILLNLAVADLFMVFGGFTTTMY. The Extracellular portion of the chain corresponds to 97–110; sequence TSMHGYFVLGRLGC. A disulfide bridge links C110 with C187. Residues 111 to 133 form a helical membrane-spanning segment; it reads NIEGFFATLGGEIALWSLVVLAI. The 'Ionic lock' involved in activated form stabilization signature appears at 134 to 136; that stretch reads ERW. The Cytoplasmic portion of the chain corresponds to 134–152; sequence ERWVVVCKPISNFRFGENH. A helical transmembrane segment spans residues 153-173; the sequence is AIMGLAFTWLMALACAAPPLV. The Extracellular segment spans residues 174-202; that stretch reads GWSRYIPEGMQCSCGIDYYTRAEGFNNES. A glycan (N-linked (GlcNAc...) asparagine) is linked at N200. The helical transmembrane segment at 203–224 threads the bilayer; it reads FVIYMFVCHFTVPLMVVFFCYG. Topologically, residues 225–252 are cytoplasmic; sequence RLLCAVKEAAAAQQESETTQRAEREVTR. Residues 253 to 274 form a helical membrane-spanning segment; it reads MVIMMVVAFLVCWLPYASVAWW. Topologically, residues 275–286 are extracellular; it reads IFTHQGSEFGPV. The helical transmembrane segment at 287-308 threads the bilayer; it reads FMTIPAFFAKSSSIYNPMIYIC. K296 bears the N6-(retinylidene)lysine mark. The Cytoplasmic portion of the chain corresponds to 309–353; it reads LNKQFRHCMITTLCCGKNPFEEEEGASTASKTEASSVSSSSVSPA. Residues C322 and C323 are each lipidated (S-palmitoyl cysteine). The segment at 331-353 is disordered; sequence EEGASTASKTEASSVSSSSVSPA. The span at 334–353 shows a compositional bias: low complexity; the sequence is ASTASKTEASSVSSSSVSPA.

Belongs to the G-protein coupled receptor 1 family. Opsin subfamily. Phosphorylated on some or all of the serine and threonine residues present in the C-terminal region. Post-translationally, contains one covalently linked retinal chromophore.

Its subcellular location is the membrane. The protein resides in the cell projection. It is found in the cilium. It localises to the photoreceptor outer segment. In terms of biological role, photoreceptor required for image-forming vision at low light intensity. While most salt water fish species use retinal as chromophore, most freshwater fish use 3-dehydroretinal, or a mixture of retinal and 3-dehydroretinal. Light-induced isomerization of 11-cis to all-trans retinal triggers a conformational change that activates signaling via G-proteins. Subsequent receptor phosphorylation mediates displacement of the bound G-protein alpha subunit by arrestin and terminates signaling. The chain is Rhodopsin (rho) from Sarpa salpa (Salema).